The following is an 83-amino-acid chain: Small ribosomal subunit protein uS17 (83 aa).

The protein belongs to the universal ribosomal protein uS17 family. In terms of assembly, part of the 30S ribosomal subunit.

Functionally, one of the primary rRNA binding proteins, it binds specifically to the 5'-end of 16S ribosomal RNA. The sequence is that of Small ribosomal subunit protein uS17 from Francisella philomiragia subsp. philomiragia (strain ATCC 25017 / CCUG 19701 / FSC 153 / O#319-036).